We begin with the raw amino-acid sequence, 545 residues long: Glucose-6-phosphate isomerase (545 aa).

Catalysis depends on glutamate 351, which acts as the Proton donor. Catalysis depends on residues histidine 382 and lysine 510.

The protein belongs to the GPI family.

It is found in the cytoplasm. It carries out the reaction alpha-D-glucose 6-phosphate = beta-D-fructose 6-phosphate. It participates in carbohydrate biosynthesis; gluconeogenesis. The protein operates within carbohydrate degradation; glycolysis; D-glyceraldehyde 3-phosphate and glycerone phosphate from D-glucose: step 2/4. In terms of biological role, catalyzes the reversible isomerization of glucose-6-phosphate to fructose-6-phosphate. The chain is Glucose-6-phosphate isomerase from Shewanella sp. (strain MR-4).